Reading from the N-terminus, the 51-residue chain is Lantibiotic streptococcin A-M49 (51 aa).

A propeptide spanning residues 1–25 is cleaved from the precursor; that stretch reads MTKEHEIINSIQEVSLEELDQIIGA. 2 cross-links (beta-methyllanthionine (Thr-Cys)) span residues 33–38 and 42–50; these read TISHEC and TWAFLATCC. The lanthionine (Ser-Cys) cross-link spans 35 to 49; that stretch reads SHECHLNTWAFLATC. A 2,3-didehydrobutyrine modification is found at T48.

It belongs to the type A lantibiotic family. Maturation of lantibiotics involves the enzymatic conversion of Thr, and Ser into dehydrated AA and the formation of thioether bonds with cysteine. This is followed by membrane translocation and cleavage of the modified precursor.

The protein localises to the secreted. It is found in the cell surface. Its function is as follows. Lanthionine-containing peptide antibiotic (lantibiotic) active on certain Gram-positive bacteria. The bactericidal activity of lantibiotics is based on depolarization of energized bacterial cytoplasmic membranes, initiated by the formation of aqueous transmembrane pores. The polypeptide is Lantibiotic streptococcin A-M49 (scnA') (Streptococcus pyogenes serotype M49).